We begin with the raw amino-acid sequence, 448 residues long: N-succinylarginine dihydrolase (448 aa).

Residues 19 to 28, N110, and 137 to 138 contribute to the substrate site; these read GGLSYGNVAS and HR. E174 is an active-site residue. Residue R214 participates in substrate binding. H250 is an active-site residue. Residues D252 and N365 each coordinate substrate. C371 functions as the Nucleophile in the catalytic mechanism.

Belongs to the succinylarginine dihydrolase family. Homodimer.

It catalyses the reaction N(2)-succinyl-L-arginine + 2 H2O + 2 H(+) = N(2)-succinyl-L-ornithine + 2 NH4(+) + CO2. It participates in amino-acid degradation; L-arginine degradation via AST pathway; L-glutamate and succinate from L-arginine: step 2/5. Functionally, catalyzes the hydrolysis of N(2)-succinylarginine into N(2)-succinylornithine, ammonia and CO(2). The sequence is that of N-succinylarginine dihydrolase from Pseudomonas syringae pv. syringae (strain B728a).